The primary structure comprises 268 residues: Ubiquinone biosynthesis protein COQ4 homolog, mitochondrial (268 aa).

H171, D172, H175, and E187 together coordinate Zn(2+).

The protein belongs to the COQ4 family. Component of a multi-subunit COQ enzyme complex. It depends on Zn(2+) as a cofactor.

The protein localises to the mitochondrion inner membrane. It carries out the reaction a 4-hydroxy-3-methoxy-5-(all-trans-polyprenyl)benzoate + H(+) = a 2-methoxy-6-(all-trans-polyprenyl)phenol + CO2. It participates in cofactor biosynthesis; ubiquinone biosynthesis. Functionally, lyase that catalyzes the C1-decarboxylation of 4-hydroxy-3-methoxy-5-(all-trans-polyprenyl)benzoic acid into 2-methoxy-6-(all-trans-polyprenyl)phenol during ubiquinone biosynthesis. The chain is Ubiquinone biosynthesis protein COQ4 homolog, mitochondrial from Drosophila sechellia (Fruit fly).